A 207-amino-acid chain; its full sequence is MKFKDKLKFYVITDSNYSDEVISVEEALKGGASSIQLRMKTSSTRKMIEVGNKLRKLTSEYDALFFVNDRLDVAQAVNADGIHVGIDDMPISKIKEIAPNLIIGASAYNTDEMKTAEMGGADYLGVGAVYSTNTKLDARNLGLDGLKNISKIASIPIVAIGGINHLNVENVLECGVSGVAVVSAIVGAENILKSAENMNELIKKYIK.

Residues 36–40 (QLRMK) and Asn68 contribute to the 4-amino-2-methyl-5-(diphosphooxymethyl)pyrimidine site. 2 residues coordinate Mg(2+): Asp69 and Asp88. Residue Ser106 participates in 4-amino-2-methyl-5-(diphosphooxymethyl)pyrimidine binding. 132–134 (TNT) is a binding site for 2-[(2R,5Z)-2-carboxy-4-methylthiazol-5(2H)-ylidene]ethyl phosphate. Lys135 serves as a coordination point for 4-amino-2-methyl-5-(diphosphooxymethyl)pyrimidine. Residues Gly162 and 182–183 (VS) contribute to the 2-[(2R,5Z)-2-carboxy-4-methylthiazol-5(2H)-ylidene]ethyl phosphate site.

Belongs to the thiamine-phosphate synthase family. It depends on Mg(2+) as a cofactor.

It catalyses the reaction 2-[(2R,5Z)-2-carboxy-4-methylthiazol-5(2H)-ylidene]ethyl phosphate + 4-amino-2-methyl-5-(diphosphooxymethyl)pyrimidine + 2 H(+) = thiamine phosphate + CO2 + diphosphate. The catalysed reaction is 2-(2-carboxy-4-methylthiazol-5-yl)ethyl phosphate + 4-amino-2-methyl-5-(diphosphooxymethyl)pyrimidine + 2 H(+) = thiamine phosphate + CO2 + diphosphate. It carries out the reaction 4-methyl-5-(2-phosphooxyethyl)-thiazole + 4-amino-2-methyl-5-(diphosphooxymethyl)pyrimidine + H(+) = thiamine phosphate + diphosphate. It participates in cofactor biosynthesis; thiamine diphosphate biosynthesis; thiamine phosphate from 4-amino-2-methyl-5-diphosphomethylpyrimidine and 4-methyl-5-(2-phosphoethyl)-thiazole: step 1/1. Functionally, condenses 4-methyl-5-(beta-hydroxyethyl)thiazole monophosphate (THZ-P) and 2-methyl-4-amino-5-hydroxymethyl pyrimidine pyrophosphate (HMP-PP) to form thiamine monophosphate (TMP). This is Thiamine-phosphate synthase from Methanococcus maripaludis (strain C6 / ATCC BAA-1332).